A 313-amino-acid polypeptide reads, in one-letter code: Putative S-adenosyl-L-methionine-dependent methyltransferase MAP_4064c (313 aa).

S-adenosyl-L-methionine contacts are provided by residues aspartate 129 and 158-159 (DL).

This sequence belongs to the UPF0677 family.

In terms of biological role, exhibits S-adenosyl-L-methionine-dependent methyltransferase activity. The polypeptide is Putative S-adenosyl-L-methionine-dependent methyltransferase MAP_4064c (Mycolicibacterium paratuberculosis (strain ATCC BAA-968 / K-10) (Mycobacterium paratuberculosis)).